Consider the following 2280-residue polypeptide: Protein Ycf2 (2280 aa).

Residue 1634–1641 (GSIGTGRS) coordinates ATP.

It belongs to the Ycf2 family.

The protein resides in the plastid. The protein localises to the chloroplast stroma. In terms of biological role, probable ATPase of unknown function. Its presence in a non-photosynthetic plant (Epifagus virginiana) and experiments in tobacco indicate that it has an essential function which is probably not related to photosynthesis. This chain is Protein Ycf2, found in Eucalyptus globulus subsp. globulus (Tasmanian blue gum).